We begin with the raw amino-acid sequence, 201 residues long: Interferon-induced transmembrane protein 10 (201 aa).

Disordered regions lie at residues 1-23 (MAQGPSQCPALLGAPASTTDGTQ) and 60-88 (AAPAPEPSASPPMAPTLFPMESKSSKTDS). The Extracellular segment spans residues 1–127 (MAQGPSQCPA…PDTTEVNDYY (127 aa)). The span at 63–73 (APEPSASPPMA) shows a compositional bias: pro residues. Residues 128–148 (LWSIFNFVYLNFCCLGFIALA) form a helical membrane-spanning segment. 2 S-palmitoyl cysteine lipidation sites follow: cysteine 140 and cysteine 141. Residues 149 to 173 (YSLKVRDKKLLNDLNGAVEDAKTAR) lie on the Cytoplasmic side of the membrane. The chain crosses the membrane as a helical span at residues 174–194 (LFNITSSALAASCIILIFIFL). The Extracellular segment spans residues 195 to 201 (RYPLTDY).

This sequence belongs to the CD225/Dispanin family.

The protein localises to the cell membrane. The protein is Interferon-induced transmembrane protein 10 (Ifitm10) of Mus musculus (Mouse).